A 444-amino-acid chain; its full sequence is Aflatoxin biosynthesis regulatory protein (444 aa).

Residues 1–26 are disordered; that stretch reads MVDHISPRASPGPIRSSQTRRARKLR. Positions 29–56 form a DNA-binding region, zn(2)-C6 fungal-type; sequence CTSCASSKVRCTKEKPACARCIERGLAC. A disordered region spans residues 64–167; sequence MGRNPRAPSP…QGLGGDLAGQ (104 aa). Positions 106 to 116 are enriched in basic residues; sequence TQAHTHAHSHP. The span at 120-130 shows a compositional bias: low complexity; that stretch reads PQSHPQSNQPP. A compositionally biased stretch (polar residues) spans 136–149; it reads PNGSSSVSAIFSHQ.

The protein resides in the nucleus. It functions in the pathway mycotoxin biosynthesis; aflatoxin biosynthesis. Its function is as follows. Involved in the regulation of aflatoxin biosynthesis. May have a role in nitrate assimilation and sclerotial morphogenesis. This chain is Aflatoxin biosynthesis regulatory protein (aflR), found in Aspergillus parasiticus.